Consider the following 262-residue polypeptide: T-cell surface glycoprotein YE1/48 (262 aa).

The Cytoplasmic portion of the chain corresponds to 1–44 (MSEQEVTYSMVRFHKSAGLQKQVRPEETKGPREAGYRRCSFHWK). Residues 45–66 (FIVIALGIFCFLLLVAVSVLAI) form a helical; Signal-anchor for type II membrane protein membrane-spanning segment. The Extracellular portion of the chain corresponds to 67–262 (KIFQYDQQKN…CGKRLDKFPH (196 aa)). N-linked (GlcNAc...) asparagine glycans are attached at residues Asn-86, Asn-103, and Asn-123. A Cell attachment site motif is present at residues 137–139 (RGD). One can recognise a C-type lectin domain in the interval 138–257 (GDKVYWFCYG…VFICICGKRL (120 aa)). Cystine bridges form between Cys-145–Cys-150, Cys-163–Cys-251, Cys-167–Cys-253, and Cys-232–Cys-245.

As to quaternary structure, homodimer; disulfide-linked. High, in T-lymphoma lines, very low in normal lymphocytes.

The protein resides in the membrane. Functionally, receptor on natural killer (NK) cells for H-2d alleles. Inhibits the activity of NK cells thus preventing cell lysis. This chain is T-cell surface glycoprotein YE1/48 (Klra1), found in Mus musculus (Mouse).